We begin with the raw amino-acid sequence, 189 residues long: Myb-like protein T (189 aa).

The Myb-like domain maps to 121–172; sequence NWSPDEQKALMVEVSTLGNKSEINWFFISQQLFLKGISRNARECQRKHESIQ.

The polypeptide is Myb-like protein T (mybT) (Dictyostelium discoideum (Social amoeba)).